A 238-amino-acid chain; its full sequence is Ribonuclease-like storage protein (238 aa).

A signal peptide spans 1-23 (MRAIYIISVIIVSLSIFSWGGNA). Gln37 is a binding site for RNA. Cys43 and Cys49 form a disulfide bridge. Residues His61, Phe109, 112-113 (HE), and 116-117 (KH) contribute to the RNA site. Residue His61 is the Proton donor of the active site. 2 disulfides stabilise this stretch: Cys76–Cys120 and Cys196–Cys207. Glu113 is a catalytic residue. The active-site Proton acceptor is the His117.

This sequence belongs to the RNase T2 family. In terms of assembly, homodimer. As to expression, root.

May act as a storage protein providing a nitrogen source. Seems to have no RNase activity although it has conserved the active site residues. The chain is Ribonuclease-like storage protein from Panax ginseng (Korean ginseng).